A 309-amino-acid chain; its full sequence is tRNA uridine(34) hydroxylase (309 aa).

Residues 126 to 220 (SDPEVIVIDT…YLEQIPPEES (95 aa)) form the Rhodanese domain. Residue C180 is the Cysteine persulfide intermediate of the active site.

The protein belongs to the TrhO family.

The catalysed reaction is uridine(34) in tRNA + AH2 + O2 = 5-hydroxyuridine(34) in tRNA + A + H2O. Its function is as follows. Catalyzes oxygen-dependent 5-hydroxyuridine (ho5U) modification at position 34 in tRNAs. The protein is tRNA uridine(34) hydroxylase of Nostoc sp. (strain PCC 7120 / SAG 25.82 / UTEX 2576).